The chain runs to 132 residues: MVMTDPIADMLTRIRNANMVKHEKLELPASNIKKEIADILKREGFVKDYELIEDNKQGVLRIFLKYSANEDKVISGIKRISKPGLRVYAKADEVPRVLNGLGIAIVSTSNGLLSDKEARSQAVGGEVLAYVW.

Belongs to the universal ribosomal protein uS8 family. Part of the 30S ribosomal subunit. Contacts proteins S5 and S12.

Functionally, one of the primary rRNA binding proteins, it binds directly to 16S rRNA central domain where it helps coordinate assembly of the platform of the 30S subunit. This is Small ribosomal subunit protein uS8 from Oceanobacillus iheyensis (strain DSM 14371 / CIP 107618 / JCM 11309 / KCTC 3954 / HTE831).